The following is a 346-amino-acid chain: Glucose-6-phosphatase 3 (346 aa).

Residues 1–24 (MESTLGAGIVIAEALQNQLAWLEN) are Lumenal-facing. Residues 25–45 (VWLWITFLGDPKILFLFYFPA) traverse the membrane as a helical segment. The Cytoplasmic segment spans residues 46–54 (AYYASRRVG). Residues 55–75 (IAVLWISLITEWLNLIFKWFL) traverse the membrane as a helical segment. The Lumenal portion of the chain corresponds to 76–114 (FGDRPFWWVHESGYYSQAPAQVHQFPSSCETGPGSPSGH). R79 lines the substrate pocket. H114 functions as the Proton donor in the catalytic mechanism. Residues 115–135 (CMITGAALWPIMTALSSQVAT) form a helical membrane-spanning segment. Topologically, residues 136–146 (RARSRWVRVMP) are cytoplasmic. Residues 147 to 164 (SLAYCTFLLAVGLSRIFI) traverse the membrane as a helical segment. R161 provides a ligand contact to substrate. The Lumenal segment spans residues 165–169 (LAHFP). H167 serves as the catalytic Nucleophile. The chain crosses the membrane as a helical span at residues 170–186 (HQVLAGLITGAVLGWLM). Over 187 to 197 (TPRVPMERELS) the chain is Cytoplasmic. The helical transmembrane segment at 198-218 (FYGLTALALMLGTSLIYWTLF) threads the bilayer. At 219-254 (TLGLDLSWSISLAFKWCERPEWIHVDSRPFASLSRD) the chain is on the lumenal side. The helical transmembrane segment at 255 to 273 (SGAALGLGIALHSPCYAQV) threads the bilayer. Residues 274 to 283 (RRAQLGNGQK) lie on the Cytoplasmic side of the membrane. The helical transmembrane segment at 284 to 304 (IACLVLAMGLLGPLDWLGHPP) threads the bilayer. Residues 305–307 (QIS) are Lumenal-facing. Residues 308–328 (LFYIFNFLKYTLWPCLVLALV) form a helical membrane-spanning segment. At 329 to 346 (PWAVHMFSAQEAPPIHSS) the chain is on the cytoplasmic side.

It belongs to the glucose-6-phosphatase family. As to expression, ubiquitously expressed. Highly expressed in skeletal muscle, at intermediate levels in heart, brain, placenta, kidney, colon, thymus, spleen and pancreas. Also detected in testis, prostate, ovary, liver, lung, small intestine and peripheral blood lymphocytes.

It is found in the endoplasmic reticulum membrane. The enzyme catalyses D-glucose 6-phosphate + H2O = D-glucose + phosphate. The protein operates within carbohydrate biosynthesis; gluconeogenesis. With respect to regulation, inhibited by vanadate. Hydrolyzes glucose-6-phosphate to glucose in the endoplasmic reticulum. May form with the glucose-6-phosphate transporter (SLC37A4/G6PT) a ubiquitously expressed complex responsible for glucose production through glycogenolysis and gluconeogenesis. Probably required for normal neutrophil function. The polypeptide is Glucose-6-phosphatase 3 (G6PC3) (Homo sapiens (Human)).